Reading from the N-terminus, the 179-residue chain is Riboflavin kinase (179 aa).

CDP is bound at residue 61–66; sequence GDGEGR. Residues threonine 90 and asparagine 92 each coordinate Mg(2+). FMN is bound by residues threonine 147 and glutamate 155. Residue 160–163 participates in CDP binding; the sequence is VELR.

It belongs to the archaeal riboflavin kinase family. Mg(2+) serves as cofactor.

The enzyme catalyses riboflavin + CTP = CDP + FMN + H(+). Its pathway is cofactor biosynthesis; FMN biosynthesis; FMN from riboflavin (CTP route): step 1/1. Functionally, catalyzes the CTP-dependent phosphorylation of riboflavin (vitamin B2) to form flavin mononucleotide (FMN). The sequence is that of Riboflavin kinase from Ignicoccus hospitalis (strain KIN4/I / DSM 18386 / JCM 14125).